A 119-amino-acid polypeptide reads, in one-letter code: Ribonuclease P protein component (119 aa).

Belongs to the RnpA family. In terms of assembly, consists of a catalytic RNA component (M1 or rnpB) and a protein subunit.

The catalysed reaction is Endonucleolytic cleavage of RNA, removing 5'-extranucleotides from tRNA precursor.. RNaseP catalyzes the removal of the 5'-leader sequence from pre-tRNA to produce the mature 5'-terminus. It can also cleave other RNA substrates such as 4.5S RNA. The protein component plays an auxiliary but essential role in vivo by binding to the 5'-leader sequence and broadening the substrate specificity of the ribozyme. This Salmonella paratyphi A (strain AKU_12601) protein is Ribonuclease P protein component.